The primary structure comprises 1313 residues: Histone-lysine N-methyltransferase, H3 lysine-4 specific (1313 aa).

6 disordered regions span residues 1–205 (MSRS…DPSR), 400–458 (KKSR…KPRH), 555–607 (GKSS…AKNL), 667–792 (IVFD…AGED), 842–908 (ELPS…SKKQ), and 932–982 (AGIE…DPEL). The segment covering 7–18 (ASFAQFFPAAPR) has biased composition (low complexity). Residues 19–31 (AARDRATERERAR) are compositionally biased toward basic and acidic residues. Residues 70 to 80 (HITSLNHSSSA) show a composition bias toward polar residues. A compositionally biased stretch (low complexity) spans 105–121 (SASSHTSTSSSIFSSST). 2 stretches are compositionally biased toward polar residues: residues 130 to 158 (SVRN…STSL) and 174 to 186 (NGLT…SATD). The segment covering 194 to 204 (GTERVPPRDPS) has biased composition (basic and acidic residues). Positions 559–607 (RSSEDHRRHSYGSEKRPPPEHRQRDDQDRRRRDEEADIEEEKKQRAKNL) are enriched in basic and acidic residues. A compositionally biased stretch (basic residues) spans 702-716 (RVRKLKSRGVNARKH). The span at 758-784 (MIRDTEEPESRPRSRVSSEEDRNKEET) shows a compositional bias: basic and acidic residues. The segment covering 843–855 (LPSQEQAVESVTP) has biased composition (polar residues). Residues 868–884 (ADVKAEPAEDKETEDSR) show a composition bias toward basic and acidic residues. Positions 895 to 907 (PKKKAKAKKKSKK) are enriched in basic residues. The span at 960–978 (LETKGEALEAPETESKPDL) shows a compositional bias: basic and acidic residues. A RxxxRR motif motif is present at residues 1137–1142 (RVNNRR). Positions 1171–1288 (KPVKFARSAI…QNEELTYDYK (118 aa)) constitute an SET domain. Tyr-1287 provides a ligand contact to S-adenosyl-L-methionine. Residues 1297 to 1313 (DRIPCLCGTAACKGFLN) form the Post-SET domain.

Belongs to the class V-like SAM-binding methyltransferase superfamily. In terms of assembly, component of the Set1C/COMPASS complex.

The protein resides in the nucleus. Its subcellular location is the chromosome. It carries out the reaction L-lysyl(4)-[histone H3] + 3 S-adenosyl-L-methionine = N(6),N(6),N(6)-trimethyl-L-lysyl(4)-[histone H3] + 3 S-adenosyl-L-homocysteine + 3 H(+). It catalyses the reaction N(6)-methyl-L-lysyl(4)-[histone H3] + S-adenosyl-L-methionine = N(6),N(6)-dimethyl-L-lysyl(4)-[histone H3] + S-adenosyl-L-homocysteine + H(+). The catalysed reaction is N(6),N(6)-dimethyl-L-lysyl(4)-[histone H3] + S-adenosyl-L-methionine = N(6),N(6),N(6)-trimethyl-L-lysyl(4)-[histone H3] + S-adenosyl-L-homocysteine + H(+). Its function is as follows. Catalytic component of the COMPASS (Set1C) complex that specifically mono-, di- and trimethylates histone H3 to form H3K4me1/2/3. Binds RNAs which might negatively affect its histone methyltransferase activity. COMPASS recognizes ubiquitinated H2B on one face of the nucleosome which stimulates the methylation of H3 on the opposing face. This is Histone-lysine N-methyltransferase, H3 lysine-4 specific (set-1) from Neurospora crassa (strain ATCC 24698 / 74-OR23-1A / CBS 708.71 / DSM 1257 / FGSC 987).